The chain runs to 159 residues: Large ribosomal subunit protein uL22c (159 aa).

This sequence belongs to the universal ribosomal protein uL22 family. Part of the 50S ribosomal subunit.

The protein resides in the plastid. Its subcellular location is the chloroplast. Its function is as follows. This protein binds specifically to 23S rRNA. Functionally, the globular domain of the protein is located near the polypeptide exit tunnel on the outside of the subunit, while an extended beta-hairpin is found that lines the wall of the exit tunnel in the center of the 70S ribosome. In Ipomoea purpurea (Common morning glory), this protein is Large ribosomal subunit protein uL22c (rpl22).